The following is a 601-amino-acid chain: Elongation factor 4 (601 aa).

A tr-type G domain is found at 2–184 (DLIRNFSIIA…EMIARVPPPT (183 aa)). GTP contacts are provided by residues 14 to 19 (DHGKST) and 131 to 134 (NKID).

This sequence belongs to the TRAFAC class translation factor GTPase superfamily. Classic translation factor GTPase family. LepA subfamily.

Its subcellular location is the cell inner membrane. The enzyme catalyses GTP + H2O = GDP + phosphate + H(+). Required for accurate and efficient protein synthesis under certain stress conditions. May act as a fidelity factor of the translation reaction, by catalyzing a one-codon backward translocation of tRNAs on improperly translocated ribosomes. Back-translocation proceeds from a post-translocation (POST) complex to a pre-translocation (PRE) complex, thus giving elongation factor G a second chance to translocate the tRNAs correctly. Binds to ribosomes in a GTP-dependent manner. This is Elongation factor 4 from Polynucleobacter necessarius subsp. necessarius (strain STIR1).